Consider the following 344-residue polypeptide: Serine proteinase inhibitor 2 (344 aa).

It belongs to the serpin family. Poxviruses subfamily.

Its subcellular location is the host cytoplasm. Functionally, viral serpin that inhibits both cysteine and serine proteinases involved in the regulation of host inflammatory and apoptosis processes. Major anti-apoptotic protein which inhibits both intrinsic and extrinsic pathways and strongly cleaves host CASP1 and CASP8 but is a rather poor inhibitor of host CASP3. Prevents the proteolytic activity of host interleukin-1-beta converting enzyme (ICE) and ICE-like enzymes. Can also block apoptosis through host tumor necrosis factor (TNF) receptor. The inhibition of host ICE is an example of a 'cross-class' interaction, in which a serpin inhibits a non-serine proteinase. Also inhibits granzyme B. In Homo sapiens (Human), this protein is Serine proteinase inhibitor 2 (OPG199).